Reading from the N-terminus, the 145-residue chain is Large ribosomal subunit protein uL11 (145 aa).

This sequence belongs to the universal ribosomal protein uL11 family. As to quaternary structure, part of the ribosomal stalk of the 50S ribosomal subunit. Interacts with L10 and the large rRNA to form the base of the stalk. L10 forms an elongated spine to which L12 dimers bind in a sequential fashion forming a multimeric L10(L12)X complex. One or more lysine residues are methylated.

In terms of biological role, forms part of the ribosomal stalk which helps the ribosome interact with GTP-bound translation factors. The polypeptide is Large ribosomal subunit protein uL11 (Rickettsia canadensis (strain McKiel)).